We begin with the raw amino-acid sequence, 503 residues long: Rhomboid-type serine protease 2 (503 aa).

The segment covering M1–Y11 has biased composition (polar residues). A disordered region spans residues M1–G66. Over M1–K136 the chain is Cytoplasmic. The helical transmembrane segment at I137 to V157 threads the bilayer. Residues K158–R253 lie on the Extracellular side of the membrane. A helical transmembrane segment spans residues F254–Q274. The Cytoplasmic segment spans residues M275–R283. Residues M284 to L304 traverse the membrane as a helical segment. The Extracellular portion of the chain corresponds to G305–C316. A helical transmembrane segment spans residues G317–W337. S319 functions as the Nucleophile in the catalytic mechanism. Topologically, residues N338 to N342 are cytoplasmic. A helical transmembrane segment spans residues P343–L363. At P364 to G365 the chain is on the extracellular side. Residues L366–M386 traverse the membrane as a helical segment. The active site involves H371. At R387–A449 the chain is on the cytoplasmic side. Residues W450–V470 form a helical membrane-spanning segment. Residues N471 to R503 lie on the Extracellular side of the membrane.

Belongs to the peptidase S54 family.

It is found in the membrane. The catalysed reaction is Cleaves type-1 transmembrane domains using a catalytic dyad composed of serine and histidine that are contributed by different transmembrane domains.. Its function is as follows. Probable rhomboid-type serine protease that catalyzes intramembrane proteolysis. This chain is Rhomboid-type serine protease 2, found in Emericella nidulans (strain FGSC A4 / ATCC 38163 / CBS 112.46 / NRRL 194 / M139) (Aspergillus nidulans).